The following is a 203-amino-acid chain: Large ribosomal subunit protein bL25 (203 aa).

This sequence belongs to the bacterial ribosomal protein bL25 family. CTC subfamily. As to quaternary structure, part of the 50S ribosomal subunit; part of the 5S rRNA/L5/L18/L25 subcomplex. Contacts the 5S rRNA. Binds to the 5S rRNA independently of L5 and L18.

In terms of biological role, this is one of the proteins that binds to the 5S RNA in the ribosome where it forms part of the central protuberance. The protein is Large ribosomal subunit protein bL25 of Cereibacter sphaeroides (strain ATCC 17029 / ATH 2.4.9) (Rhodobacter sphaeroides).